The chain runs to 318 residues: Pantothenate kinase (318 aa).

Residue 96 to 103 participates in ATP binding; that stretch reads GSVSVGKS.

This sequence belongs to the prokaryotic pantothenate kinase family.

Its subcellular location is the cytoplasm. It catalyses the reaction (R)-pantothenate + ATP = (R)-4'-phosphopantothenate + ADP + H(+). The protein operates within cofactor biosynthesis; coenzyme A biosynthesis; CoA from (R)-pantothenate: step 1/5. The chain is Pantothenate kinase from Bradyrhizobium sp. (strain BTAi1 / ATCC BAA-1182).